Here is a 107-residue protein sequence, read N- to C-terminus: MNKKELFDAFDGFSQNLMVTLAEIEAMKKQVQSLVEENTILRLENTKLRERLSHLEHETVAKNPFKQRKDHLEGIYDEGFHICNFFYGQRRENDEECMFCRELLDRK.

4 residues coordinate Zn(2+): His81, Cys83, Cys97, and Cys100.

This sequence belongs to the YabA family. As to quaternary structure, homotetramer. Interacts with both DnaA and DnaN, acting as a bridge between these two proteins. It depends on Zn(2+) as a cofactor.

It localises to the cytoplasm. Its subcellular location is the nucleoid. Involved in control of chromosome replication initiation. Inhibits the cooperative binding of DnaA to the oriC region, thus negatively regulating initiation of chromosome replication. Inhibits the ability of DnaA-ATP to form a helix on DNA; does not disassemble preformed DnaA-DNA helices. Decreases the residence time of DnaA on the chromosome at its binding sites (oriC, replication forks and promoter-binding sites). Tethers DnaA to the replication machinery via the DNA polymerase beta sliding clamp subunit (dnaN). Associates with oriC and other DnaA targets on the chromosome in a DnaA-dependent manner. The chain is Replication initiation control protein YabA from Streptococcus pyogenes serotype M18 (strain MGAS8232).